We begin with the raw amino-acid sequence, 250 residues long: Protein BTG4 (250 aa).

The protein belongs to the BTG family. In terms of assembly, interacts with CNOT7 and EIF4E. Interacts with CNOT8. Expressed in oocytes. Expressed in testis and in olfactory epithelium.

Adapter protein that bridges CNOT7, a catalytic subunit of the CCR4-NOT complex, to EIF4E, and facilitates maternal mRNAs decay during the maturation of oocytes and in the fertilized egg. It is therefore required for the maternal-zygotic transition (MZT), zygotic cleavage and initiation of embryonic development. The polypeptide is Protein BTG4 (Btg4) (Mus musculus (Mouse)).